We begin with the raw amino-acid sequence, 340 residues long: S-adenosylmethionine:tRNA ribosyltransferase-isomerase (340 aa).

It belongs to the QueA family. As to quaternary structure, monomer.

The protein resides in the cytoplasm. The catalysed reaction is 7-aminomethyl-7-carbaguanosine(34) in tRNA + S-adenosyl-L-methionine = epoxyqueuosine(34) in tRNA + adenine + L-methionine + 2 H(+). Its pathway is tRNA modification; tRNA-queuosine biosynthesis. Its function is as follows. Transfers and isomerizes the ribose moiety from AdoMet to the 7-aminomethyl group of 7-deazaguanine (preQ1-tRNA) to give epoxyqueuosine (oQ-tRNA). This Francisella tularensis subsp. tularensis (strain FSC 198) protein is S-adenosylmethionine:tRNA ribosyltransferase-isomerase.